Here is a 396-residue protein sequence, read N- to C-terminus: Tryptophan synthase beta chain (396 aa).

Lysine 88 carries the post-translational modification N6-(pyridoxal phosphate)lysine.

Belongs to the TrpB family. In terms of assembly, tetramer of two alpha and two beta chains. Pyridoxal 5'-phosphate is required as a cofactor.

It catalyses the reaction (1S,2R)-1-C-(indol-3-yl)glycerol 3-phosphate + L-serine = D-glyceraldehyde 3-phosphate + L-tryptophan + H2O. The protein operates within amino-acid biosynthesis; L-tryptophan biosynthesis; L-tryptophan from chorismate: step 5/5. Its function is as follows. The beta subunit is responsible for the synthesis of L-tryptophan from indole and L-serine. This Actinobacillus pleuropneumoniae serotype 5b (strain L20) protein is Tryptophan synthase beta chain.